A 416-amino-acid chain; its full sequence is Serine hydroxymethyltransferase (416 aa).

(6S)-5,6,7,8-tetrahydrofolate-binding positions include L121 and 125–127 (GHL). K229 bears the N6-(pyridoxal phosphate)lysine mark.

Belongs to the SHMT family. In terms of assembly, homodimer. Pyridoxal 5'-phosphate is required as a cofactor.

It localises to the cytoplasm. The catalysed reaction is (6R)-5,10-methylene-5,6,7,8-tetrahydrofolate + glycine + H2O = (6S)-5,6,7,8-tetrahydrofolate + L-serine. The protein operates within one-carbon metabolism; tetrahydrofolate interconversion. Its pathway is amino-acid biosynthesis; glycine biosynthesis; glycine from L-serine: step 1/1. In terms of biological role, catalyzes the reversible interconversion of serine and glycine with tetrahydrofolate (THF) serving as the one-carbon carrier. This reaction serves as the major source of one-carbon groups required for the biosynthesis of purines, thymidylate, methionine, and other important biomolecules. Also exhibits THF-independent aldolase activity toward beta-hydroxyamino acids, producing glycine and aldehydes, via a retro-aldol mechanism. This chain is Serine hydroxymethyltransferase, found in Dechloromonas aromatica (strain RCB).